Reading from the N-terminus, the 299-residue chain is dTDP-4-dehydrorhamnose reductase (299 aa).

NADH-binding positions include 10 to 12 (GQV), D30, 39 to 40 (DF), and 63 to 65 (AHT). 11–12 (QV) contacts NADPH. Residues 39–40 (DF), 63–65 (AHT), and Y102 each bind NADPH. 104-105 (TD) contacts dTDP-beta-L-rhamnose. Positions 128 and 132 each coordinate NADH. Residues Y128 and K132 each coordinate NADPH. The Proton donor/acceptor role is filled by Y128. Residue W153 participates in dTDP-beta-L-rhamnose binding.

This sequence belongs to the dTDP-4-dehydrorhamnose reductase family. Homodimer. Requires Mg(2+) as cofactor.

It carries out the reaction dTDP-beta-L-rhamnose + NADP(+) = dTDP-4-dehydro-beta-L-rhamnose + NADPH + H(+). It participates in carbohydrate biosynthesis; dTDP-L-rhamnose biosynthesis. Its pathway is bacterial outer membrane biogenesis; LPS O-antigen biosynthesis. Its function is as follows. Involved in the biosynthesis of the dTDP-L-rhamnose which is an important component of lipopolysaccharide (LPS). Catalyzes the reduction of dTDP-6-deoxy-L-lyxo-4-hexulose to yield dTDP-L-rhamnose. RmlD uses NADH and NADPH nearly equally well. The polypeptide is dTDP-4-dehydrorhamnose reductase (Escherichia coli (strain K12)).